A 289-amino-acid chain; its full sequence is ATP synthase gamma chain (289 aa).

Belongs to the ATPase gamma chain family. F-type ATPases have 2 components, CF(1) - the catalytic core - and CF(0) - the membrane proton channel. CF(1) has five subunits: alpha(3), beta(3), gamma(1), delta(1), epsilon(1). CF(0) has three main subunits: a, b and c.

It is found in the cell inner membrane. In terms of biological role, produces ATP from ADP in the presence of a proton gradient across the membrane. The gamma chain is believed to be important in regulating ATPase activity and the flow of protons through the CF(0) complex. The chain is ATP synthase gamma chain from Coxiella burnetii (strain Dugway 5J108-111).